The chain runs to 95 residues: Alpha-conotoxin-like Cp20.4 (95 aa).

An N-terminal signal peptide occupies residues M1–G24. A propeptide spanning residues Q25–R45 is cleaved from the precursor. E50 is subject to 4-carboxyglutamate. 4-hydroxyproline is present on P56. 4 disulfides stabilise this stretch: C64–C73, C69–C81, C74–C91, and C79–C93.

It belongs to the conotoxin D superfamily. Hetero-, homo- or pseudo-homodimer (identical sequence, different post-translational modifications). As to expression, expressed by the venom duct.

It is found in the secreted. Functionally, alpha-conotoxins act on postsynaptic membranes, they bind to the nicotinic acetylcholine receptors (nAChR) and thus inhibit them. Through its two C-terminal domains, this homodimeric protein would bind to two nAChR allosteric sites, located outside the nAChR C-loop of the principal binding face and at the adjacent binding interface in a clockwise direction. This toxin specifically blocks mammalian neuronal nAChR of the alpha-7/CHRNA7, alpha-3-beta-2/CHRNA3-CHRNB2 and alpha-4-beta-2/CHRNA4-CHRNB2 subtypes. The polypeptide is Alpha-conotoxin-like Cp20.4 (Conus capitaneus (Captain cone)).